Here is a 327-residue protein sequence, read N- to C-terminus: Olfactory receptor 226 (327 aa).

Residues 1–26 (MERRNHSGRVSEFVLLGFPAPAPLRV) lie on the Extracellular side of the membrane. The N-linked (GlcNAc...) asparagine glycan is linked to Asn-5. Residues 27–50 (LLFFLSLLAYVLVLTENMLIIIAI) form a helical membrane-spanning segment. Over 51–58 (RNHPTLHK) the chain is Cytoplasmic. A helical transmembrane segment spans residues 59-80 (PMYFFLANMSFLEIWYVTVTIP). Topologically, residues 81–104 (KMLAGFIGSKENHGQLISFEACMT) are extracellular. Cys-102 and Cys-194 are disulfide-bonded. Residues 105–125 (QLYFFLGLGCTECVLLAVMAY) traverse the membrane as a helical segment. The Cytoplasmic portion of the chain corresponds to 126 to 144 (DRYVAICHPLHYPVIVSSR). The chain crosses the membrane as a helical span at residues 145 to 163 (LCVQMAAGSWAGGFGISMV). The Extracellular segment spans residues 164 to 201 (KVFLISRLSYCGPNTINHFFCDVSPLLNLSCTDMSTAE). The chain crosses the membrane as a helical span at residues 202–224 (LTDFVLAIFILLGPLSVTGASYM). Residues 225-241 (AITGAVMRIPSAAGRHK) lie on the Cytoplasmic side of the membrane. Residues 242–265 (AFSTCASHLTVVIIFYAASIFIYA) form a helical membrane-spanning segment. At 266–277 (RPKALSAFDTNK) the chain is on the extracellular side. Residues 278-297 (LVSVLYAVIVPLFNPIIYCL) traverse the membrane as a helical segment. Residues 298–327 (RNQDVKRALRRTLHLAQDQEANTNKGSKNG) are Cytoplasmic-facing.

This sequence belongs to the G-protein coupled receptor 1 family. As to expression, olfactory epithelium.

Its subcellular location is the cell membrane. Functionally, odorant receptor. The protein is Olfactory receptor 226 (Olr226) of Rattus norvegicus (Rat).